The sequence spans 644 residues: MQGFLRSLFFGVKKIPKPFAPLVEKGVLKEALELKKDRYFLKEGFDIGKVEKVKDKAFFISLAKNYPKDPLIKNLPPSFKTDALILCQIECSKKRPIAFFKAALLNADHTMIAYLAKKNNQIVAIPFKEPFKKPVSLKHSQKSLLELPRHCVVKIDTKKREISEILGALEDPLIDENLSLSLFDRVKDFSKDCLNLAQHYAQLKASDFKDRINYSHIPFITIDPKDAKDFDDAIFYDQEKRVLFVAVADVSEFVPKHSSLDKEARVRGFSVYFPNSVYPMLPLSLSQGACSLKAFEKRLALVYEIPLDNLKNARLSQGVIEVRANCTYEEINHFLSANQSSLDKDLQQSLLGFLEMALKLKKERLKKGFNFNSFENKLYLNKEGRIEKIETEKESDAHTLIEEAMLLANQSSARLLDEHFHNKGIYRTHKEPSLEQQKRLYDKLFDYEIVRPKNMGFFPFLEHALKIAKEKSIEREVSRLIIKSQNLALYSPLQESHFGLGFASYTHFTSPIRRYSDLALHRLLKELLFYQAKGCSYLLEETPELCAELNALQKKAALIERDFIKRKFARLALELLEKEFLGVVLEVKDWVVVGLKEFIGLKVLVKTNKVFKPLEKVRVTITHADLILGQVRGEITERIKEHVS.

Residues 211 to 529 enclose the RNB domain; that stretch reads RINYSHIPFI…LHRLLKELLF (319 aa). The 72-residue stretch at 573-644 folds into the S1 motif domain; that stretch reads LELLEKEFLG…ITERIKEHVS (72 aa).

The protein belongs to the RNR ribonuclease family. RNase R subfamily.

The protein resides in the cytoplasm. It catalyses the reaction Exonucleolytic cleavage in the 3'- to 5'-direction to yield nucleoside 5'-phosphates.. Its function is as follows. 3'-5' exoribonuclease that releases 5'-nucleoside monophosphates and is involved in maturation of structured RNAs. The protein is Ribonuclease R of Helicobacter pylori (strain ATCC 700392 / 26695) (Campylobacter pylori).